Reading from the N-terminus, the 662-residue chain is Carboxysome assembly protein CsoS2 (662 aa).

The interval 1-227 (MSTSNAQSGR…KRRNAKEAPQ (227 aa)) is N-terminal domain. Disordered stretches follow at residues 1 to 258 (MSTS…SESG), 277 to 322 (NCDV…TCSA), and 342 to 419 (PAKS…RGSC). The N-repeat 1 repeat unit spans residues 8 to 27 (SGRAAAIARRNAQVKGKGYT). Low complexity-rich tracts occupy residues 28–57 (ASAA…SQPS) and 64–76 (SVAP…ASAA). Residues 58–72 (RSRRKVSVAPTATPA) form an N-repeat 2 repeat. Over residues 120 to 135 (RQAKAEKPTKRSERRT) the composition is skewed to basic and acidic residues. A compositionally biased stretch (polar residues) spans 141 to 150 (VASQQPSGRL). The N-repeat 3 repeat unit spans residues 147 to 168 (SGRLQSKAYRKAQAKGKAGQEA). Low complexity-rich tracts occupy residues 161-170 (KGKAGQEAFK), 237-247 (GQSVSGTQVGQ), and 289-300 (VTQTQTTRGQVV). 5 M-repeat repeats span residues 228 to 278 (KVGE…SKNC), 288 to 338 (KVTQ…KMYC), 388 to 436 (KVMP…AKAC), 446 to 491 (KVTA…TEQF), and 496 to 550 (VDEQ…AMVC). The middle region stretch occupies residues 228–559 (KVGESQTLHG…CDSTNAAAPG (332 aa)). Polar residues predominate over residues 391 to 404 (PSQTAKGNTTTGSQ). Residues 560-631 (ESDFPAMIGQ…SPMGASQYRP (72 aa)) form a C-terminal domain region. The C-repeat 1 repeat unit spans residues 564 to 572 (PAMIGQAQP). Disordered stretches follow at residues 588–607 (KITG…DGPW) and 619–662 (AGQS…GARA). A C-terminal peptide region spans residues 632–662 (VNNEVPMSPITGSSGNTDTGAKVTLSGGARA). The segment covering 641–650 (ITGSSGNTDT) has biased composition (polar residues).

The protein belongs to the CsoS2 family. As to quaternary structure, interacts via its N-terminal repeats with RuBisCO. Interacts with the major shell protein CsoS1. In terms of processing, unlike H.neapolitanus and predictions for P.marinus strain MIT 9313, this protein is not thought to have ribosomal frameshifting.

It is found in the carboxysome. Required for alpha-carboxysome (Cb) assembly, mediates interaction between RuBisCO and the Cb shell. The protein is probably intrinsically disordered. The C-terminal repeats act as the encapsulation signal to target proteins to the Cb; they are necessary and sufficient to target both CsoS2 and foreign proteins to the Cb. The N-terminal repeats of this protein bind simultaneously to both subunits of RuBisCO. Probably also interacts with the major shell proteins (CsoS1); that interaction would increase the local concentration of CsoS2 so that it can condense RuBisCO and full carboxysomes can be formed. In Hydrogenovibrio crunogenus (strain DSM 25203 / XCL-2) (Thiomicrospira crunogena), this protein is Carboxysome assembly protein CsoS2.